A 603-amino-acid polypeptide reads, in one-letter code: uncharacterized protein (603 aa).

Over residues 496 to 513 the composition is skewed to acidic residues; sequence EEEDQEEDDTSDDDDQEK. Disordered stretches follow at residues 496 to 536 and 549 to 568; these read EEED…GSLE and AVAEQDRKKTQKKHKIDTAQ. Positions 517–533 are enriched in polar residues; sequence NPQNNIGSLTRTPSSPG.

The protein belongs to the herpesviridae US22 family.

This is an uncharacterized protein from Human cytomegalovirus (strain AD169) (HHV-5).